We begin with the raw amino-acid sequence, 145 residues long: Bacilliredoxin MW1318 (145 aa).

It belongs to the bacilliredoxin family.

The chain is Bacilliredoxin MW1318 from Staphylococcus aureus (strain MW2).